A 425-amino-acid polypeptide reads, in one-letter code: GTPase Obg (425 aa).

Residues 1 to 158 (MFIDKARIFV…RWITLELKMI (158 aa)) form the Obg domain. One can recognise an OBG-type G domain in the interval 159 to 330 (ADVGLLGFPN…VIAYVSKMLK (172 aa)). GTP-binding positions include 165 to 172 (GFPNVGKS), 190 to 194 (FTTLT), 212 to 215 (DIPG), 282 to 285 (NKFD), and 311 to 313 (SAA). The Mg(2+) site is built by Ser-172 and Thr-192. Residues 344 to 425 (YRPELDIGTE…IYELEFEFYN (82 aa)) form the OCT domain.

It belongs to the TRAFAC class OBG-HflX-like GTPase superfamily. OBG GTPase family. In terms of assembly, monomer. Mg(2+) serves as cofactor.

Its subcellular location is the cytoplasm. An essential GTPase which binds GTP, GDP and possibly (p)ppGpp with moderate affinity, with high nucleotide exchange rates and a fairly low GTP hydrolysis rate. Plays a role in control of the cell cycle, stress response, ribosome biogenesis and in those bacteria that undergo differentiation, in morphogenesis control. The sequence is that of GTPase Obg from Clostridioides difficile (strain 630) (Peptoclostridium difficile).